Here is a 1350-residue protein sequence, read N- to C-terminus: Probable serine/threonine-protein kinase irlE (1350 aa).

An N-linked (GlcNAc...) asparagine glycan is attached at Asn-37. Residues 149-169 (FWEILASCYGTISFIKFFNIF) form a helical membrane-spanning segment. A coiled-coil region spans residues 731 to 802 (EAELKEKFEI…NIQQNYENQH (72 aa)). Over residues 761-771 (LKKKNKLKKQK) the composition is skewed to basic residues. 2 disordered regions span residues 761-795 (LKKKNKLKKQKNQQQQQQAKQQAQQQKQQHQQNIQ) and 807-864 (RKFN…TTNS). Residues 772–795 (NQQQQQQAKQQAQQQKQQHQQNIQ) are compositionally biased toward low complexity. The segment covering 809 to 823 (FNQQTKGRPISPSSI) has biased composition (polar residues). Positions 824 to 864 (QNQNLNPTLLQNQNQTSNPTPNLESTKKATPTTTTTTTTNS) are enriched in low complexity. Residues 903–1166 (KKESNILGRG…LSSVLKHPLF (264 aa)) enclose the Protein kinase domain. Residues 909–917 (LGRGSNGTL) and Lys-932 each bind ATP. Residue Asp-1034 is the Proton acceptor of the active site. The region spanning 1169–1346 (SLKKIKFLES…KNSIHFSNDT (178 aa)) is the KEN domain.

It belongs to the protein kinase superfamily. Ser/Thr protein kinase family.

The protein localises to the membrane. The enzyme catalyses L-seryl-[protein] + ATP = O-phospho-L-seryl-[protein] + ADP + H(+). It catalyses the reaction L-threonyl-[protein] + ATP = O-phospho-L-threonyl-[protein] + ADP + H(+). The protein is Probable serine/threonine-protein kinase irlE (irlE) of Dictyostelium discoideum (Social amoeba).